We begin with the raw amino-acid sequence, 681 residues long: uncharacterized protein (681 aa).

The protein belongs to the protein kinase superfamily. ADCK protein kinase family.

This is an uncharacterized protein from Synechocystis sp. (strain ATCC 27184 / PCC 6803 / Kazusa).